A 156-amino-acid chain; its full sequence is ATP synthase subunit b (156 aa).

Residues 7–27 (LIGQLIAFALFVAFCMKFVWP) form a helical membrane-spanning segment.

This sequence belongs to the ATPase B chain family. As to quaternary structure, F-type ATPases have 2 components, F(1) - the catalytic core - and F(0) - the membrane proton channel. F(1) has five subunits: alpha(3), beta(3), gamma(1), delta(1), epsilon(1). F(0) has three main subunits: a(1), b(2) and c(10-14). The alpha and beta chains form an alternating ring which encloses part of the gamma chain. F(1) is attached to F(0) by a central stalk formed by the gamma and epsilon chains, while a peripheral stalk is formed by the delta and b chains.

It is found in the cell inner membrane. Functionally, f(1)F(0) ATP synthase produces ATP from ADP in the presence of a proton or sodium gradient. F-type ATPases consist of two structural domains, F(1) containing the extramembraneous catalytic core and F(0) containing the membrane proton channel, linked together by a central stalk and a peripheral stalk. During catalysis, ATP synthesis in the catalytic domain of F(1) is coupled via a rotary mechanism of the central stalk subunits to proton translocation. Its function is as follows. Component of the F(0) channel, it forms part of the peripheral stalk, linking F(1) to F(0). This is ATP synthase subunit b from Actinobacillus pleuropneumoniae serotype 5b (strain L20).